The primary structure comprises 105 residues: Large ribosomal subunit protein uL24 (105 aa).

This sequence belongs to the universal ribosomal protein uL24 family. Part of the 50S ribosomal subunit.

Its function is as follows. One of two assembly initiator proteins, it binds directly to the 5'-end of the 23S rRNA, where it nucleates assembly of the 50S subunit. One of the proteins that surrounds the polypeptide exit tunnel on the outside of the subunit. The sequence is that of Large ribosomal subunit protein uL24 from Staphylococcus epidermidis (strain ATCC 35984 / DSM 28319 / BCRC 17069 / CCUG 31568 / BM 3577 / RP62A).